Reading from the N-terminus, the 634-residue chain is Extracellular metalloproteinase MEP (634 aa).

The signal sequence occupies residues methionine 1 to alanine 18. Positions histidine 19–glutamate 245 are excised as a propeptide. Zn(2+) is bound at residue histidine 429. Glutamate 430 is an active-site residue. Histidine 433 provides a ligand contact to Zn(2+).

The protein belongs to the peptidase M36 family. Zn(2+) is required as a cofactor.

The protein localises to the secreted. Functionally, secreted metalloproteinase that allows assimilation of proteinaceous substrates and probably acts as a virulence factor. The chain is Extracellular metalloproteinase MEP (MEP) from Neosartorya fischeri (strain ATCC 1020 / DSM 3700 / CBS 544.65 / FGSC A1164 / JCM 1740 / NRRL 181 / WB 181) (Aspergillus fischerianus).